Consider the following 67-residue polypeptide: Small ribosomal subunit protein bS21 (67 aa).

The protein belongs to the bacterial ribosomal protein bS21 family.

This chain is Small ribosomal subunit protein bS21, found in Desulfovibrio desulfuricans (strain ATCC 27774 / DSM 6949 / MB).